Consider the following 406-residue polypeptide: Argininosuccinate synthase (406 aa).

ATP is bound by residues 11–19 (AYSGGLDTS) and Ala-38. Residues Tyr-91 and Ser-96 each contribute to the L-citrulline site. Gly-121 is a binding site for ATP. L-aspartate contacts are provided by Thr-123, Asn-127, and Asp-128. Asn-127 contributes to the L-citrulline binding site. Arg-131, Ser-181, Ser-190, Glu-266, and Tyr-278 together coordinate L-citrulline.

This sequence belongs to the argininosuccinate synthase family. Type 1 subfamily. Homotetramer.

It is found in the cytoplasm. The catalysed reaction is L-citrulline + L-aspartate + ATP = 2-(N(omega)-L-arginino)succinate + AMP + diphosphate + H(+). It functions in the pathway amino-acid biosynthesis; L-arginine biosynthesis; L-arginine from L-ornithine and carbamoyl phosphate: step 2/3. The chain is Argininosuccinate synthase from Campylobacter jejuni subsp. jejuni serotype O:6 (strain 81116 / NCTC 11828).